The following is a 240-amino-acid chain: 2,3,4,5-tetrahydropyridine-2,6-dicarboxylate N-acetyltransferase (240 aa).

It belongs to the transferase hexapeptide repeat family. DapH subfamily.

It carries out the reaction (S)-2,3,4,5-tetrahydrodipicolinate + acetyl-CoA + H2O = L-2-acetamido-6-oxoheptanedioate + CoA. Its pathway is amino-acid biosynthesis; L-lysine biosynthesis via DAP pathway; LL-2,6-diaminopimelate from (S)-tetrahydrodipicolinate (acetylase route): step 1/3. In terms of biological role, catalyzes the transfer of an acetyl group from acetyl-CoA to tetrahydrodipicolinate. The sequence is that of 2,3,4,5-tetrahydropyridine-2,6-dicarboxylate N-acetyltransferase from Bacillus thuringiensis (strain Al Hakam).